A 583-amino-acid polypeptide reads, in one-letter code: Malonate--CoA ligase ACSF3, mitochondrial (583 aa).

Residues 1–27 constitute a mitochondrion transit peptide; the sequence is MPPHLALPFRRLFWSLASSQLIPRRHR. Residues 202–210, D455, R469, and K561 each bind ATP; that span reads TSGTTGRPK.

The protein belongs to the ATP-dependent AMP-binding enzyme family.

It is found in the mitochondrion. The enzyme catalyses tetracosanoate + ATP + CoA = tetracosanoyl-CoA + AMP + diphosphate. It carries out the reaction malonate + ATP + CoA = malonyl-CoA + AMP + diphosphate. Functionally, catalyzes the initial reaction in intramitochondrial fatty acid synthesis, by activating malonate and methylmalonate, but not acetate, into their respective CoA thioester. May have some preference toward very-long-chain substrates. The sequence is that of Malonate--CoA ligase ACSF3, mitochondrial from Mus musculus (Mouse).